Consider the following 673-residue polypeptide: UvrABC system protein B (673 aa).

Residues 26–414 (EGLEDGLAHQ…GDEVVDQVVR (389 aa)) form the Helicase ATP-binding domain. An ATP-binding site is contributed by 39-46 (GVTGSGKT). The Beta-hairpin signature appears at 92-115 (YYDYYQPEAYVPSSDTFIEKDASV). The Helicase C-terminal domain maps to 431 to 597 (QVDDLLSEIR…GLNKKVVDIL (167 aa)). The region spanning 633-668 (QQKIHELEEQMMQHAQNLEFEEAAQIRDQLHQLREL) is the UVR domain.

This sequence belongs to the UvrB family. In terms of assembly, forms a heterotetramer with UvrA during the search for lesions. Interacts with UvrC in an incision complex.

Its subcellular location is the cytoplasm. Functionally, the UvrABC repair system catalyzes the recognition and processing of DNA lesions. A damage recognition complex composed of 2 UvrA and 2 UvrB subunits scans DNA for abnormalities. Upon binding of the UvrA(2)B(2) complex to a putative damaged site, the DNA wraps around one UvrB monomer. DNA wrap is dependent on ATP binding by UvrB and probably causes local melting of the DNA helix, facilitating insertion of UvrB beta-hairpin between the DNA strands. Then UvrB probes one DNA strand for the presence of a lesion. If a lesion is found the UvrA subunits dissociate and the UvrB-DNA preincision complex is formed. This complex is subsequently bound by UvrC and the second UvrB is released. If no lesion is found, the DNA wraps around the other UvrB subunit that will check the other stand for damage. This is UvrABC system protein B from Salmonella typhi.